We begin with the raw amino-acid sequence, 188 residues long: Ribosome-recycling factor (188 aa).

The protein belongs to the RRF family.

Its subcellular location is the cytoplasm. In terms of biological role, responsible for the release of ribosomes from messenger RNA at the termination of protein biosynthesis. May increase the efficiency of translation by recycling ribosomes from one round of translation to another. The polypeptide is Ribosome-recycling factor (Granulibacter bethesdensis (strain ATCC BAA-1260 / CGDNIH1)).